Consider the following 341-residue polypeptide: G2/mitotic-specific cyclin C13-1 (341 aa).

Belongs to the cyclin family. Cyclin AB subfamily.

Its function is as follows. Essential for the control of the cell cycle at the G2/M (mitosis) transition. Interacts with the CDC2 and CDK2 protein kinases to form MPF. G2/M cyclins accumulate steadily during G2 and are abruptly destroyed at mitosis. The polypeptide is G2/mitotic-specific cyclin C13-1 (Daucus carota (Wild carrot)).